The following is a 248-amino-acid chain: MVKQIRRYALFQATPDSEFVKEMYGGYFNVFVSAFGDEGEQWDLFRVIDGEFPRDEDLEKYEGFVISGSLHDAFTEEDWIIELCSVCKKLDVMKKKILGICFGHQIICRVRGGKVGRARKGPDIGLGNITIVQDVIKPGDYFDQIESLSIIQCHRDEVLEPPESARVIGFSDKCDVEIFSVEDHLLCFQGHPEYNKEILLEIIDRVHKIKFVEEEILEKAKDSIKKFEPDTQRLHMLCKNFLKGRRTH.

Positions 17-212 (SEFVKEMYGG…IDRVHKIKFV (196 aa)) constitute a Glutamine amidotransferase type-1 domain. The active-site Nucleophile is the cysteine 101. Residues histidine 191 and glutamate 193 contribute to the active site.

It belongs to the peptidase C26 family.

The protein resides in the cytoplasm. It is found in the cytosol. The enzyme catalyses an S-[(1E)-1-(hydroxyimino)-omega-(methylsulfanyl)alkyl]-L-glutathione + H2O = an S-[(1E)-1-(hydroxyimino)-omega-(methylsulfanyl)alkyl]-L-cysteinylglycine + L-glutamate. It carries out the reaction (E)-1-(glutathione-S-yl)-2-(1H-indol-3-yl)acetohydroximate + H2O = (E)-1-(glycyl-L-cystein-S-yl)-2-(1H-indol-3-yl)acetohydroximate + L-glutamate. The catalysed reaction is 2-(glutathion-S-yl)-2-(1H-indol-3-yl)acetonitrile + H2O = 2-(glycyl-L-cystein-S-yl)-2-(1H-indol-3-yl)acetonitrile + L-glutamate. It catalyses the reaction (Z)-1-(glutathione-S-yl)-2-phenylacetohydroximate + H2O = (Z)-1-(glycyl-L-cystein-S-yl)-2-phenylacetohydroximate + L-glutamate. The protein operates within secondary metabolite biosynthesis. In terms of biological role, involved in glucosinolate biosynthesis. Hydrolyzes the gamma-glutamyl peptide bond of several glutathione (GSH) conjugates to produce Cys-Gly conjugates related to glucosinolates. The gamma-Glu-Cys-Gly-GSH conjugates are the sulfur-donating molecule in glucosinolate biosynthesis. This is Gamma-glutamyl peptidase 2 from Arabidopsis thaliana (Mouse-ear cress).